Reading from the N-terminus, the 703-residue chain is Antigen peptide transporter 2 (703 aa).

At 1–6 (MALSHP) the chain is on the lumenal side. Residues 7 to 27 (RPWASLLLVDLALLGLLQSSL) form a helical membrane-spanning segment. Over 28–56 (GTLLPPGLPGLWLEGTLRLGVLWGLLKVG) the chain is Cytoplasmic. The helical transmembrane segment at 57-77 (GLLRLVGTFLPLLCLTNPLFF) threads the bilayer. Residues 78–98 (SLRALVGSTMSTSVVRVASAS) are Lumenal-facing. The helical transmembrane segment at 99–119 (WGWLLADYGAVALSLAVWAVL) threads the bilayer. Residues 120–148 (SPAGAQEKEPGQENNRALMIRLLRLSKPD) are Cytoplasmic-facing. Residues 149-169 (LPFLIVAFIFLAMAVWWEMFI) traverse the membrane as a helical segment. The ABC transmembrane type-1 domain maps to 152–435 (LIVAFIFLAM…LVYMYGDMLS (284 aa)). Residues 170-187 (PHYSGRVIDILGGDFDPD) lie on the Lumenal side of the membrane. A helical membrane pass occupies residues 188–208 (AFASAIFFMCLFSVGSSLSAG). The Cytoplasmic portion of the chain corresponds to 209–266 (CRGGSFLFAESRINLRIREQLFSSLLRQDLAFFQETKTGELNSRLSSDTSLMSQWLSL). A helical transmembrane segment spans residues 267-287 (NANILLRSLVKVVGLYYFMLQ). The Lumenal portion of the chain corresponds to 288 to 293 (VSPRLT). A helical membrane pass occupies residues 294 to 314 (FLSLLDLPLTIAAEKVYNPRH). The tract at residues 301-389 (PLTIAAEKVY…QRVMALGMQV (89 aa)) is part of the peptide-binding site. Topologically, residues 315–374 (QAVLKEIQDAVAKAGQVVREAVGGLQTVRSFGAEEQEVRRYKEALERCRQLWWRRDLEKS) are cytoplasmic. Residues 375–395 (LYLVIQRVMALGMQVLILNVG) traverse the membrane as a helical segment. Residues 396–408 (VQQILAGEVTRGG) are Lumenal-facing. Residues 409 to 429 (LLSFLLYQEEVGHHVQNLVYM) form a helical membrane-spanning segment. The tract at residues 414-433 (LYQEEVGHHVQNLVYMYGDM) is part of the peptide-binding site. Residues 430–703 (YGDMLSNVGA…AHLVQQRLEA (274 aa)) lie on the Cytoplasmic side of the membrane. The ABC transporter domain maps to 468 to 702 (VEFQDVSFSY…YAHLVQQRLE (235 aa)). 503 to 510 (GPNGSGKS) serves as a coordination point for ATP.

Belongs to the ABC transporter superfamily. ABCB family. MHC peptide exporter (TC 3.A.1.209) subfamily. Heterodimer of TAP1 and TAP2 (TAP1-TAP2). A component of the peptide loading complex (PLC), interacts via TAPBP with MHCI heterodimer; this interaction mediates peptide-MHCI assembly. Mg(2+) serves as cofactor.

Its subcellular location is the endoplasmic reticulum membrane. It carries out the reaction a peptide antigen(in) + ATP + H2O = a peptide antigen(out) + ADP + phosphate + H(+). Functionally, ABC transporter associated with antigen processing. In complex with TAP1 mediates unidirectional translocation of peptide antigens from cytosol to endoplasmic reticulum (ER) for loading onto MHC class I (MHCI) molecules. Uses the chemical energy of ATP to export peptides against the concentration gradient. During the transport cycle alternates between 'inward-facing' state with peptide binding site facing the cytosol to 'outward-facing' state with peptide binding site facing the ER lumen. Peptide antigen binding to ATP-loaded TAP1-TAP2 induces a switch to hydrolysis-competent 'outward-facing' conformation ready for peptide loading onto nascent MHCI molecules. Subsequently ATP hydrolysis resets the transporter to the 'inward facing' state for a new cycle. As a component of the peptide loading complex (PLC), acts as a molecular scaffold essential for peptide-MHCI assembly and antigen presentation. The polypeptide is Antigen peptide transporter 2 (Tap2) (Rattus norvegicus (Rat)).